Consider the following 919-residue polypeptide: Isoleucine--tRNA ligase (919 aa).

The 'HIGH' region signature appears at 57–67 (PYANGHIHIGT). Position 553 (glutamate 553) interacts with L-isoleucyl-5'-AMP. A 'KMSKS' region motif is present at residues 594–598 (KMSKS). Residue lysine 597 participates in ATP binding. 4 residues coordinate Zn(2+): cysteine 887, cysteine 890, cysteine 907, and cysteine 910.

The protein belongs to the class-I aminoacyl-tRNA synthetase family. IleS type 1 subfamily. Monomer. The cofactor is Zn(2+).

The protein localises to the cytoplasm. It catalyses the reaction tRNA(Ile) + L-isoleucine + ATP = L-isoleucyl-tRNA(Ile) + AMP + diphosphate. Functionally, catalyzes the attachment of isoleucine to tRNA(Ile). As IleRS can inadvertently accommodate and process structurally similar amino acids such as valine, to avoid such errors it has two additional distinct tRNA(Ile)-dependent editing activities. One activity is designated as 'pretransfer' editing and involves the hydrolysis of activated Val-AMP. The other activity is designated 'posttransfer' editing and involves deacylation of mischarged Val-tRNA(Ile). The chain is Isoleucine--tRNA ligase from Thermotoga petrophila (strain ATCC BAA-488 / DSM 13995 / JCM 10881 / RKU-1).